Consider the following 132-residue polypeptide: Small ribosomal subunit protein uS8 (132 aa).

It belongs to the universal ribosomal protein uS8 family. Part of the 30S ribosomal subunit. Contacts proteins S5 and S12.

In terms of biological role, one of the primary rRNA binding proteins, it binds directly to 16S rRNA central domain where it helps coordinate assembly of the platform of the 30S subunit. This chain is Small ribosomal subunit protein uS8, found in Paracoccus denitrificans (strain Pd 1222).